Consider the following 239-residue polypeptide: 2,3,4,5-tetrahydropyridine-2,6-dicarboxylate N-acetyltransferase (239 aa).

This sequence belongs to the transferase hexapeptide repeat family. DapH subfamily.

The enzyme catalyses (S)-2,3,4,5-tetrahydrodipicolinate + acetyl-CoA + H2O = L-2-acetamido-6-oxoheptanedioate + CoA. It functions in the pathway amino-acid biosynthesis; L-lysine biosynthesis via DAP pathway; LL-2,6-diaminopimelate from (S)-tetrahydrodipicolinate (acetylase route): step 1/3. Functionally, catalyzes the transfer of an acetyl group from acetyl-CoA to tetrahydrodipicolinate. The polypeptide is 2,3,4,5-tetrahydropyridine-2,6-dicarboxylate N-acetyltransferase (Staphylococcus aureus (strain bovine RF122 / ET3-1)).